Here is an 883-residue protein sequence, read N- to C-terminus: Probable pre-mRNA-splicing factor ATP-dependent RNA helicase DEAH8 (883 aa).

The Helicase ATP-binding domain maps to 232–395; that stretch reads LKLIEENQVL…FDSARIYLIP (164 aa). 245–252 serves as a coordination point for ATP; the sequence is GETGSGKT. The short motif at 342 to 345 is the DEAH box element; sequence DEAH. The Helicase C-terminal domain occupies 416–589; that stretch reads TVIRTVVQIH…SVVLTLKSLG (174 aa). The disordered stretch occupies residues 845–883; the sequence is EDTRPKKTQRRIEEASTSKVDTNKKTRTSKVDTNKKSKR.

Belongs to the DEAD box helicase family. DEAH subfamily. PRP2 sub-subfamily. Predominantly expressed in flowers.

The enzyme catalyses ATP + H2O = ADP + phosphate + H(+). Functionally, may be involved in pre-mRNA splicing. The protein is Probable pre-mRNA-splicing factor ATP-dependent RNA helicase DEAH8 of Arabidopsis thaliana (Mouse-ear cress).